A 332-amino-acid polypeptide reads, in one-letter code: 2-hydroxyacid dehydrogenase homolog 1 (332 aa).

NAD(+) contacts are provided by residues 154–155 (RI), 233–235 (TSR), and Asp259. Arg235 is a catalytic residue. The active site involves Glu264. The active-site Proton donor is the His296. 296–299 (HQAF) contacts NAD(+).

The protein belongs to the D-isomer specific 2-hydroxyacid dehydrogenase family.

Its subcellular location is the cytoplasm. It localises to the nucleus. This Schizosaccharomyces pombe (strain 972 / ATCC 24843) (Fission yeast) protein is 2-hydroxyacid dehydrogenase homolog 1.